Here is a 159-residue protein sequence, read N- to C-terminus: 2-C-methyl-D-erythritol 2,4-cyclodiphosphate synthase (159 aa).

A divalent metal cation-binding residues include Asp8 and His10. Residues 8–10 (DVH) and 34–35 (HS) contribute to the 4-CDP-2-C-methyl-D-erythritol 2-phosphate site. His42 contacts a divalent metal cation. 4-CDP-2-C-methyl-D-erythritol 2-phosphate-binding positions include 56 to 58 (DIG), 61 to 65 (FPDTD), 132 to 135 (TTTE), Phe139, and Arg142.

It belongs to the IspF family. In terms of assembly, homotrimer. Requires a divalent metal cation as cofactor.

The catalysed reaction is 4-CDP-2-C-methyl-D-erythritol 2-phosphate = 2-C-methyl-D-erythritol 2,4-cyclic diphosphate + CMP. Its pathway is isoprenoid biosynthesis; isopentenyl diphosphate biosynthesis via DXP pathway; isopentenyl diphosphate from 1-deoxy-D-xylulose 5-phosphate: step 4/6. Involved in the biosynthesis of isopentenyl diphosphate (IPP) and dimethylallyl diphosphate (DMAPP), two major building blocks of isoprenoid compounds. Catalyzes the conversion of 4-diphosphocytidyl-2-C-methyl-D-erythritol 2-phosphate (CDP-ME2P) to 2-C-methyl-D-erythritol 2,4-cyclodiphosphate (ME-CPP) with a corresponding release of cytidine 5-monophosphate (CMP). The protein is 2-C-methyl-D-erythritol 2,4-cyclodiphosphate synthase of Syntrophobacter fumaroxidans (strain DSM 10017 / MPOB).